We begin with the raw amino-acid sequence, 27 residues long: Flagellar filament 34 kDa core protein (27 aa).

Belongs to the bacterial flagellin family. In terms of assembly, the flagellum consists of an outer layer composed of repeating units of FlaA around a core that contains one or all of five antigenically related polypeptides.

It localises to the periplasmic flagellum. The protein localises to the periplasm. Its function is as follows. Component of the core of the flagella. This Spirochaeta aurantia protein is Flagellar filament 34 kDa core protein.